Here is a 315-residue protein sequence, read N- to C-terminus: MSFSSDVRNELARIIPEKECCRKAELAALLAISGDLVVGEDGRRILKVQADNAATARKIITLLKENYQIPSTFKALEQKRFKRKRIYEVNVLLDGEDEALNKELEEILLLREKETTPVLNRSLLGRTCCKRAYLRGIFLSRGSINRPEGEYHLELVLNDSRMALAVQKMLDKFALEPGLVERKNYLVVYLKESEKIVDFLRVVEASRALLNFENVRIIKSVRNNVNRQVNCETANLSKTIDASLRQIELIKRLLEEQGLEILPGNLRDLAEMRMSYTDASLKELGDLLDPPLSKSGVAYRMRKLEESVKEILQED.

The segment at residues 280–313 is a DNA-binding region (H-T-H motif); the sequence is SLKELGDLLDPPLSKSGVAYRMRKLEESVKEILQ.

Belongs to the WhiA family.

In terms of biological role, involved in cell division and chromosome segregation. The polypeptide is Probable cell division protein WhiA (Syntrophomonas wolfei subsp. wolfei (strain DSM 2245B / Goettingen)).